A 385-amino-acid chain; its full sequence is GDSL esterase/lipase 5 (385 aa).

Residues 1-35 (MRESTLMEKVTRRTISSFIFFIVSSTILFLAGKSS) form the signal peptide. The N-linked (GlcNAc...) asparagine glycan is linked to asparagine 45. Residue serine 55 is the Nucleophile of the active site. N-linked (GlcNAc...) asparagine glycosylation is found at asparagine 66, asparagine 194, asparagine 211, and asparagine 289. Catalysis depends on residues aspartate 345 and histidine 348.

Belongs to the 'GDSL' lipolytic enzyme family.

The protein resides in the secreted. This chain is GDSL esterase/lipase 5 (GLIP5), found in Arabidopsis thaliana (Mouse-ear cress).